The sequence spans 357 residues: tRNA-specific 2-thiouridylase MnmA (357 aa).

Residues 11-18 (AMSGGVDS) and Leu-37 each bind ATP. The Nucleophile role is filled by Cys-102. The cysteines at positions 102 and 197 are disulfide-linked. Residue Gly-126 coordinates ATP. The tract at residues 148-150 (KDQ) is interaction with tRNA. Catalysis depends on Cys-197, which acts as the Cysteine persulfide intermediate. Residues 301-302 (RY) form an interaction with tRNA region.

This sequence belongs to the MnmA/TRMU family.

The protein localises to the cytoplasm. It catalyses the reaction S-sulfanyl-L-cysteinyl-[protein] + uridine(34) in tRNA + AH2 + ATP = 2-thiouridine(34) in tRNA + L-cysteinyl-[protein] + A + AMP + diphosphate + H(+). Catalyzes the 2-thiolation of uridine at the wobble position (U34) of tRNA, leading to the formation of s(2)U34. The sequence is that of tRNA-specific 2-thiouridylase MnmA from Dehalococcoides mccartyi (strain ATCC BAA-2266 / KCTC 15142 / 195) (Dehalococcoides ethenogenes (strain 195)).